The following is a 191-amino-acid chain: HTH-type transcriptional regulator YjdC (191 aa).

The HTH tetR-type domain occupies 1 to 60 (MQREDVLGEALKLLELQGIANTTLEMVAERVDYPLDELRRFWPDKEAILYDALRYLSQQI).

The polypeptide is HTH-type transcriptional regulator YjdC (yjdC) (Escherichia coli (strain K12)).